The chain runs to 106 residues: Small ribosomal subunit protein bS16 (106 aa).

The segment at Lys84–Lys106 is disordered.

This chain is Small ribosomal subunit protein bS16, found in Rhodopseudomonas palustris (strain ATCC BAA-98 / CGA009).